The primary structure comprises 1840 residues: Collagen alpha-1(V) chain (1840 aa).

Residues 1-36 form the signal peptide; sequence MDVHTRWKDRLPVGPAAVPPLLLLLLLLWAPPQSRA. A Laminin G-like domain is found at 72 to 244; it reads DVAYRVSKDA…DYCEHYSPDC (173 aa). The tract at residues 231 to 445 is nonhelical region; that stretch reads RAAYDYCEHY…MPANQDTIYE (215 aa). Residues tyrosine 234, tyrosine 236, tyrosine 240, tyrosine 262, tyrosine 263, and tyrosine 271 each carry the sulfotyrosine modification. 3 disordered regions span residues 242-523, 528-547, and 561-1576; these read PDCD…TMLM, FGGG…QESQ, and GPAG…EVIQ. Residues 258–268 show a composition bias toward acidic residues; sequence NPDEYYPEGDG. Low complexity-rich tracts occupy residues 335 to 352 and 376 to 386; these read DYDY…PYED and TSTIITSNTSN. The tract at residues 446–560 is interrupted collagenous region; the sequence is GIGGPRGEKG…ILQQARLALR (115 aa). The span at 472 to 487 shows a compositional bias: pro residues; sequence PPGPEGPAGLPGPPGT. Positions 508-523 are enriched in low complexity; the sequence is LPGADGLPGPPGTMLM. Over residues 561 to 572 the composition is skewed to low complexity; the sequence is GPAGPMGLTGRP. Residues 561–1572 form a triple-helical region region; that stretch reads GPAGPMGLTG…GLPGPPGPPG (1012 aa). 3 positions are modified to 4-hydroxyproline: proline 572, proline 578, and proline 623. Lysine 629 is subject to 5-hydroxylysine. Position 641 is a 4-hydroxyproline (proline 641). At lysine 644 the chain carries 5-hydroxylysine. Residues proline 650, proline 656, proline 659, proline 677, and proline 680 each carry the 4-hydroxyproline modification. A compositionally biased stretch (low complexity) spans 673–688; that stretch reads PRGLPGEPGPRGLLGP. Proline 682 and proline 688 each carry 3-hydroxyproline. Residues 689–698 show a composition bias toward pro residues; sequence KGPPGPPGPP. Proline 692, proline 698, and proline 707 each carry 4-hydroxyproline. The residue at position 710 (lysine 710) is a 5-hydroxylysine. Proline 719, proline 722, proline 728, and proline 734 each carry 4-hydroxyproline. Positions 724–743 are enriched in low complexity; sequence QQGNPGAQGLPGPQGAIGPP. Lysine 746 is subject to 5-hydroxylysine. Positions 749-758 are enriched in low complexity; sequence LGKPGLPGMP. Residues proline 752, proline 758, proline 764, proline 767, and proline 773 each carry the 4-hydroxyproline modification. Residue lysine 776 is modified to 5-hydroxylysine. Proline 782 and proline 791 each carry 4-hydroxyproline. Lysine 797, lysine 806, lysine 809, and lysine 812 each carry 5-hydroxylysine. Proline 818 bears the 4-hydroxyproline mark. Lysine 821 bears the 5-hydroxylysine mark. Proline 836 carries the 4-hydroxyproline modification. Positions 839 to 848 are enriched in basic and acidic residues; it reads RGEDGPEGPK. 5-hydroxylysine is present on residues lysine 848 and lysine 866. Residues proline 872, proline 875, and proline 878 each carry the 4-hydroxyproline modification. Lysine 884 is subject to 5-hydroxylysine. A 4-hydroxyproline mark is found at proline 890 and proline 893. Lysine 899 bears the 5-hydroxylysine mark. Proline 905 and proline 908 each carry 4-hydroxyproline. The segment covering 910-919 has biased composition (low complexity); it reads PRGQRGPTGP. Residues proline 932 and proline 947 each carry the 4-hydroxyproline modification. Low complexity-rich tracts occupy residues 973 to 992 and 1001 to 1013; these read KDGL…QGKT and VGPQ…TGPM. 4 positions are modified to 4-hydroxyproline: proline 1019, proline 1022, proline 1025, and proline 1031. A compositionally biased stretch (low complexity) spans 1090 to 1106; that stretch reads SPGERGPAGAAGPIGIP. A compositionally biased stretch (pro residues) spans 1108-1117; it reads RPGPQGPPGP. Residues proline 1223 and proline 1226 each carry the 4-hydroxyproline modification. The segment covering 1261 to 1270 has biased composition (low complexity); that stretch reads PSGAPGADGP. Positions 1296–1305 are enriched in gly residues; sequence GLPGEGGPLG. 2 stretches are compositionally biased toward pro residues: residues 1382 to 1400 and 1456 to 1471; these read TGEP…PGPA and SPGP…PPGL. 4-hydroxyproline is present on residues proline 1469 and proline 1472. A compositionally biased stretch (low complexity) spans 1487-1496; it reads PGLIGLIGPP. A compositionally biased stretch (pro residues) spans 1528-1543; the sequence is PLGPPGPPGLPGPPGP. Over residues 1544 to 1556 the composition is skewed to low complexity; sequence KGAKGSSGPTGPK. The segment at 1573–1607 is nonhelical region; it reads EVIQPLPIQASRTRRNIDASQLLDDGAGESYLDYA. A sulfotyrosine mark is found at tyrosine 1603 and tyrosine 1606. Residues 1611–1839 enclose the Fibrillar collagen NC1 domain; sequence EEIFGSLNSL…GFEVGPACFL (229 aa).

This sequence belongs to the fibrillar collagen family. In terms of assembly, trimers of two alpha 1(V) and one alpha 2(V) chains in most tissues and trimers of one alpha 1(V), one alpha 2(V), and one alpha 3(V) chains in placenta. Interacts with CSPG4. Hydroxylation on proline residues within the sequence motif, GXPG, is most likely to be 4-hydroxy as this fits the requirement for 4-hydroxylation in vertebrates. Post-translationally, sulfated on 40% of tyrosines. Ubiquitously expressed.

The protein resides in the secreted. It is found in the extracellular space. Its subcellular location is the extracellular matrix. Type V collagen is a member of group I collagen (fibrillar forming collagen). It is a minor connective tissue component of nearly ubiquitous distribution. Type V collagen binds to DNA, heparan sulfate, thrombospondin, heparin, and insulin. In Cricetulus longicaudatus (Long-tailed dwarf hamster), this protein is Collagen alpha-1(V) chain (COL5A1).